The chain runs to 300 residues: Merozoite surface protein 2 (300 aa).

An N-terminal signal peptide occupies residues 1-20; the sequence is MKVIKTLSIINFFIFVTFNI. 2 N-linked (GlcNAc...) asparagine glycosylation sites follow: Asn22 and Asn36. Positions 44-226 are polymorphic region; it reads EESKPPTGAV…EQTESPELQS (183 aa). Residues 51 to 58 form a 1; inverted repeat; that stretch reads GAVAGSGA. The segment at 51–110 is 7 X 8 AA tandem repeats of G-S-G-A-G-A-V-A; the sequence is GAVAGSGAGAGSGAGAVAGSGAGAVAGSGAGAVAGSGAGAVAGSGAGAVAGSGAVAGSGA. 5 consecutive repeat copies span residues 61–68, 69–76, 77–84, 85–92, and 93–100. The stretch at 103-110 is one 7; inverted repeat; it reads GAVAGSGA. Residues 111–261 are disordered; sequence GNGANPGADA…DSQKECTDGN (151 aa). Residues 123 to 148 show a composition bias toward low complexity; the sequence is SPSTPATTTTTTTTNDAEASTSTSSE. The segment covering 149–165 has biased composition (basic and acidic residues); the sequence is NRNHNNAETNPKGKGEV. Polar residues-rich tracts occupy residues 167 to 193 and 200 to 228; these read KPNQANKETQNNSNVQQDSQTKSNVPR and KSPTAQPEQAENSAPTAEQTESPELQSAP. An N-linked (GlcNAc...) asparagine glycan is attached at Asn177. N-linked (GlcNAc...) asparagine glycosylation is present at Asn249. Residues Cys257 and Cys265 are joined by a disulfide bond. Asn273 and Asn274 each carry an N-linked (GlcNAc...) asparagine glycan. Asn274 is lipidated: GPI-anchor amidated asparagine. Residues 275-300 constitute a propeptide, removed in mature form; sequence SSNIASINKFVVLISATLVLSFAIFI.

It localises to the cell membrane. Functionally, may play a role in the merozoite attachment to the erythrocyte. This chain is Merozoite surface protein 2, found in Plasmodium falciparum (isolate imr143).